Reading from the N-terminus, the 432-residue chain is Adenylosuccinate synthetase (432 aa).

Residues 13–19 (GDEGKGK) and 41–43 (GHT) contribute to the GTP site. Aspartate 14 acts as the Proton acceptor in catalysis. 2 residues coordinate Mg(2+): aspartate 14 and glycine 41. Residues 14–17 (DEGK), 39–42 (NAGH), threonine 130, arginine 144, glutamine 225, threonine 240, and arginine 306 contribute to the IMP site. The active-site Proton donor is histidine 42. 302–308 (TVTGRAR) contacts substrate. Residues arginine 308, 334–336 (KLD), and 416–418 (STG) contribute to the GTP site.

Belongs to the adenylosuccinate synthetase family. Homodimer. It depends on Mg(2+) as a cofactor.

Its subcellular location is the cytoplasm. The catalysed reaction is IMP + L-aspartate + GTP = N(6)-(1,2-dicarboxyethyl)-AMP + GDP + phosphate + 2 H(+). Its pathway is purine metabolism; AMP biosynthesis via de novo pathway; AMP from IMP: step 1/2. In terms of biological role, plays an important role in the de novo pathway of purine nucleotide biosynthesis. Catalyzes the first committed step in the biosynthesis of AMP from IMP. The protein is Adenylosuccinate synthetase of Herminiimonas arsenicoxydans.